We begin with the raw amino-acid sequence, 135 residues long: Putative pre-16S rRNA nuclease (135 aa).

The protein belongs to the YqgF nuclease family.

The protein resides in the cytoplasm. Could be a nuclease involved in processing of the 5'-end of pre-16S rRNA. This Christiangramia forsetii (strain DSM 17595 / CGMCC 1.15422 / KT0803) (Gramella forsetii) protein is Putative pre-16S rRNA nuclease.